The following is an 816-amino-acid chain: Protein kinase C-binding protein NELL2 (816 aa).

The first 21 residues, 1 to 21 (MESRVLLRTFCLIFGLGAVWG), serve as a signal peptide directing secretion. Asparagine 53, asparagine 225, asparagine 293, and asparagine 298 each carry an N-linked (GlcNAc...) asparagine glycan. One can recognise a Laminin G-like domain in the interval 64–228 (PRSVKASTAT…AQCPDLNRTC (165 aa)). The 60-residue stretch at 272-331 (RTCTMKGTTYREFESWIDGCKNCTCLNGTIQCETLICPNPDCPLNSALAYVDGKCCKECK) folds into the VWFC 1 domain. The region spanning 397 to 439 (GYDFCSERHNCMENSVCRNLNDRAVCSCRDGFRALREDNAYCE) is the EGF-like 1 domain. 3 disulfides stabilise this stretch: cysteine 401-cysteine 413, cysteine 407-cysteine 422, and cysteine 424-cysteine 438. Ca(2+) is bound by residues aspartate 440, isoleucine 441, and glutamate 443. The 42-residue stretch at 440-481 (DIDECAEGRHYCRENTMCVNTPGSFMCICKTGYIRIDDYSCT) folds into the EGF-like 2; calcium-binding domain. Disulfide bonds link cysteine 444–cysteine 457, cysteine 451–cysteine 466, cysteine 468–cysteine 480, cysteine 486–cysteine 499, cysteine 493–cysteine 508, cysteine 510–cysteine 521, cysteine 525–cysteine 535, cysteine 529–cysteine 541, and cysteine 543–cysteine 552. Ca(2+) is bound by residues asparagine 459, threonine 460, and serine 463. In terms of domain architecture, EGF-like 3; calcium-binding spans 482–522 (EHDECITNQHNCDENALCFNTVGGHNCVCKPGYTGNGTTCK). Asparagine 517 is a glycosylation site (N-linked (GlcNAc...) asparagine). In terms of domain architecture, EGF-like 4 spans 523–553 (AFCKDGCRNGGACIAANVCACPQGFTGPSCE). Threonine 548 carries O-linked (GlcNAc...) threonine glycosylation. Positions 555, 556, and 558 each coordinate Ca(2+). Residues 555–601 (DIDECSDGFVQCDSRANCINLPGWYHCECRDGYHDNGMFSPSGESCE) form the EGF-like 5; calcium-binding domain. Cystine bridges form between cysteine 559–cysteine 572, cysteine 566–cysteine 581, and cysteine 583–cysteine 600. Residues asparagine 574, leucine 575, and tryptophan 578 each contribute to the Ca(2+) site. Residues aspartate 602, isoleucine 603, and glutamate 605 each coordinate Ca(2+). The region spanning 602-637 (DIDECGTGRHSCANDTICFNLDGGYDCRCPHGKNCT) is the EGF-like 6; calcium-binding domain. 3 disulfides stabilise this stretch: cysteine 606/cysteine 619, cysteine 613/cysteine 628, and cysteine 630/cysteine 636. N-linked (GlcNAc...) asparagine glycosylation occurs at asparagine 615. Asparagine 621, leucine 622, and glycine 625 together coordinate Ca(2+). N-linked (GlcNAc...) asparagine glycosylation is present at asparagine 635. VWFC domains lie at 638–693 (GDCI…PECD) and 698–756 (SQCL…PRCV).

Homotrimer. Binds to PRKCB. Interacts with NICOL1; this interaction triggers epididymal differentiation.

It is found in the secreted. In terms of biological role, plays multiple roles in neural tissues, regulates neuronal proliferation, survival, differentiation, polarization, as well as axon guidance and synaptic functions. Plays an important role in axon development during neuronal differentiation through the MAPK intracellular signaling pathway. Via binding to its receptor ROBO3, plays a role in axon guidance, functions as a repulsive guidance cue for commissural axons, helping to steer them across the spinal cord midline. Required for neuron survival through the modulation of MAPK signaling pathways too. Involved in the regulation of hypothalamic GNRH secretion and the control of puberty. Its function is as follows. Testicular luminal protein that signals through a ROS1-pathway to regulate the epididymal initial segment (IS) maturation, sperm maturation and male fertility. The polypeptide is Protein kinase C-binding protein NELL2 (NELL2) (Pongo abelii (Sumatran orangutan)).